A 375-amino-acid chain; its full sequence is Succinyl-diaminopimelate desuccinylase (375 aa).

Histidine 66 lines the Zn(2+) pocket. Residue aspartate 68 is part of the active site. Aspartate 99 serves as a coordination point for Zn(2+). Glutamate 133 (proton acceptor) is an active-site residue. Residues glutamate 134, glutamate 162, and histidine 348 each coordinate Zn(2+).

This sequence belongs to the peptidase M20A family. DapE subfamily. As to quaternary structure, homodimer. Zn(2+) is required as a cofactor. The cofactor is Co(2+).

The catalysed reaction is N-succinyl-(2S,6S)-2,6-diaminopimelate + H2O = (2S,6S)-2,6-diaminopimelate + succinate. The protein operates within amino-acid biosynthesis; L-lysine biosynthesis via DAP pathway; LL-2,6-diaminopimelate from (S)-tetrahydrodipicolinate (succinylase route): step 3/3. Functionally, catalyzes the hydrolysis of N-succinyl-L,L-diaminopimelic acid (SDAP), forming succinate and LL-2,6-diaminopimelate (DAP), an intermediate involved in the bacterial biosynthesis of lysine and meso-diaminopimelic acid, an essential component of bacterial cell walls. This Photorhabdus laumondii subsp. laumondii (strain DSM 15139 / CIP 105565 / TT01) (Photorhabdus luminescens subsp. laumondii) protein is Succinyl-diaminopimelate desuccinylase.